A 263-amino-acid chain; its full sequence is 3-methyl-2-oxobutanoate hydroxymethyltransferase (263 aa).

2 residues coordinate Mg(2+): Asp45 and Asp84. Residues 45–46 (DS), Asp84, and Lys112 contribute to the 3-methyl-2-oxobutanoate site. Residue Glu114 coordinates Mg(2+). Catalysis depends on Glu180, which acts as the Proton acceptor.

Belongs to the PanB family. Homodecamer; pentamer of dimers. It depends on Mg(2+) as a cofactor.

It is found in the cytoplasm. It catalyses the reaction 3-methyl-2-oxobutanoate + (6R)-5,10-methylene-5,6,7,8-tetrahydrofolate + H2O = 2-dehydropantoate + (6S)-5,6,7,8-tetrahydrofolate. It functions in the pathway cofactor biosynthesis; (R)-pantothenate biosynthesis; (R)-pantoate from 3-methyl-2-oxobutanoate: step 1/2. Catalyzes the reversible reaction in which hydroxymethyl group from 5,10-methylenetetrahydrofolate is transferred onto alpha-ketoisovalerate to form ketopantoate. In Salmonella arizonae (strain ATCC BAA-731 / CDC346-86 / RSK2980), this protein is 3-methyl-2-oxobutanoate hydroxymethyltransferase.